Consider the following 265-residue polypeptide: MPRVTTKTVQEMKEEGVPIAALTAYDYTSARLLDRAGADVLLVGDSAANVMAGHETTLPMTLDQMIYHAQCVVRGIDRSLVVVDLPFGAYQGDPTEALDSAIRVMKEAGAHAVKLEGGAPVVEAVERMVTAGIPVMGHLGLTPQSIYDYGTYQVRARDEEEADELRADAKRLEEAGCFAVVLEKIPAELAAEVTASLSIPTIGIGAGDQTDGQVLVSHDALGLSTDFEPRFVRRYARLDETIIDAIGAYVSDVRDRSFPDEDESY.

The Mg(2+) site is built by aspartate 45 and aspartate 84. 3-methyl-2-oxobutanoate-binding positions include 45–46, aspartate 84, and lysine 114; that span reads DS. Glutamate 116 contributes to the Mg(2+) binding site. Glutamate 183 functions as the Proton acceptor in the catalytic mechanism.

Belongs to the PanB family. Homodecamer; pentamer of dimers. Mg(2+) serves as cofactor.

The protein resides in the cytoplasm. The catalysed reaction is 3-methyl-2-oxobutanoate + (6R)-5,10-methylene-5,6,7,8-tetrahydrofolate + H2O = 2-dehydropantoate + (6S)-5,6,7,8-tetrahydrofolate. It participates in cofactor biosynthesis; (R)-pantothenate biosynthesis; (R)-pantoate from 3-methyl-2-oxobutanoate: step 1/2. In terms of biological role, catalyzes the reversible reaction in which hydroxymethyl group from 5,10-methylenetetrahydrofolate is transferred onto alpha-ketoisovalerate to form ketopantoate. In Salinibacter ruber (strain DSM 13855 / M31), this protein is 3-methyl-2-oxobutanoate hydroxymethyltransferase.